We begin with the raw amino-acid sequence, 192 residues long: Peptidyl-tRNA hydrolase (192 aa).

H17 provides a ligand contact to tRNA. H22 functions as the Proton acceptor in the catalytic mechanism. F68, N70, and N116 together coordinate tRNA.

This sequence belongs to the PTH family. Monomer.

The protein resides in the cytoplasm. The enzyme catalyses an N-acyl-L-alpha-aminoacyl-tRNA + H2O = an N-acyl-L-amino acid + a tRNA + H(+). Its function is as follows. Hydrolyzes ribosome-free peptidyl-tRNAs (with 1 or more amino acids incorporated), which drop off the ribosome during protein synthesis, or as a result of ribosome stalling. In terms of biological role, catalyzes the release of premature peptidyl moieties from peptidyl-tRNA molecules trapped in stalled 50S ribosomal subunits, and thus maintains levels of free tRNAs and 50S ribosomes. The chain is Peptidyl-tRNA hydrolase from Xylella fastidiosa (strain 9a5c).